A 682-amino-acid polypeptide reads, in one-letter code: Potassium-transporting ATPase ATP-binding subunit (682 aa).

The next 4 membrane-spanning stretches (helical) occupy residues 34 to 54 (PVMF…IAMA), 62 to 82 (ALFS…ANFA), 219 to 239 (IALT…TATL), and 254 to 274 (VLVA…LSAI). The active-site 4-aspartylphosphate intermediate is D307. Residues D344, E348, 377–384 (FTAQSRMS), and K395 contribute to the ATP site. Mg(2+)-binding residues include D518 and D522. A run of 3 helical transmembrane segments spans residues 588-608 (FAII…LNIM), 616-636 (AILS…PLAL), and 656-676 (IYGL…DLLL).

Belongs to the cation transport ATPase (P-type) (TC 3.A.3) family. Type IA subfamily. In terms of assembly, the system is composed of three essential subunits: KdpA, KdpB and KdpC.

Its subcellular location is the cell inner membrane. It catalyses the reaction K(+)(out) + ATP + H2O = K(+)(in) + ADP + phosphate + H(+). Functionally, part of the high-affinity ATP-driven potassium transport (or Kdp) system, which catalyzes the hydrolysis of ATP coupled with the electrogenic transport of potassium into the cytoplasm. This subunit is responsible for energy coupling to the transport system and for the release of the potassium ions to the cytoplasm. In Escherichia coli O157:H7 (strain EC4115 / EHEC), this protein is Potassium-transporting ATPase ATP-binding subunit.